We begin with the raw amino-acid sequence, 95 residues long: Small ribosomal subunit protein uS15 (95 aa).

This sequence belongs to the universal ribosomal protein uS15 family. Part of the 30S ribosomal subunit. Forms a bridge to the 50S subunit in the 70S ribosome, contacting the 23S rRNA.

One of the primary rRNA binding proteins, it binds directly to 16S rRNA where it helps nucleate assembly of the platform of the 30S subunit by binding and bridging several RNA helices of the 16S rRNA. Functionally, forms an intersubunit bridge (bridge B4) with the 23S rRNA of the 50S subunit in the ribosome. This chain is Small ribosomal subunit protein uS15, found in Sulfurihydrogenibium sp. (strain YO3AOP1).